We begin with the raw amino-acid sequence, 447 residues long: Signal recognition particle 54 kDa protein (447 aa).

GTP-binding positions include 103 to 110 (GVQGSGKT), 185 to 189 (DTAGR), and 245 to 248 (TKMD).

Belongs to the GTP-binding SRP family. SRP54 subfamily. Part of the signal recognition particle protein translocation system, which is composed of SRP and FtsY. Archaeal SRP consists of a 7S RNA molecule of 300 nucleotides and two protein subunits: SRP54 and SRP19.

Its subcellular location is the cytoplasm. The catalysed reaction is GTP + H2O = GDP + phosphate + H(+). Involved in targeting and insertion of nascent membrane proteins into the cytoplasmic membrane. Binds to the hydrophobic signal sequence of the ribosome-nascent chain (RNC) as it emerges from the ribosomes. The SRP-RNC complex is then targeted to the cytoplasmic membrane where it interacts with the SRP receptor FtsY. In Saccharolobus islandicus (strain Y.G.57.14 / Yellowstone #1) (Sulfolobus islandicus), this protein is Signal recognition particle 54 kDa protein.